The primary structure comprises 86 residues: Large ribosomal subunit protein bL31B (86 aa).

The protein belongs to the bacterial ribosomal protein bL31 family. Type B subfamily. As to quaternary structure, part of the 50S ribosomal subunit.

The polypeptide is Large ribosomal subunit protein bL31B (Streptococcus equi subsp. equi (strain 4047)).